The following is a 297-amino-acid chain: HTH-type transcriptional regulator ArgP (297 aa).

The region spanning 4 to 60 (PDYRTLQALDAVIRERGFERAAQKLCITQSAVSQRIKQLENLFGQPLLVRTVPPRPT) is the HTH lysR-type domain. The segment at residues 21-40 (FERAAQKLCITQSAVSQRIK) is a DNA-binding region (H-T-H motif).

Belongs to the LysR transcriptional regulatory family. In terms of assembly, homodimer.

Functionally, controls the transcription of genes involved in arginine and lysine metabolism. The sequence is that of HTH-type transcriptional regulator ArgP from Serratia proteamaculans (strain 568).